Here is a 227-residue protein sequence, read N- to C-terminus: tRNA (guanine-N(1)-)-methyltransferase (227 aa).

S-adenosyl-L-methionine contacts are provided by residues Gly-107 and 127–132 (LGDFIL).

This sequence belongs to the RNA methyltransferase TrmD family. In terms of assembly, homodimer.

It is found in the cytoplasm. It catalyses the reaction guanosine(37) in tRNA + S-adenosyl-L-methionine = N(1)-methylguanosine(37) in tRNA + S-adenosyl-L-homocysteine + H(+). Specifically methylates guanosine-37 in various tRNAs. The sequence is that of tRNA (guanine-N(1)-)-methyltransferase from Mesomycoplasma hyopneumoniae (strain 7448) (Mycoplasma hyopneumoniae).